A 96-amino-acid chain; its full sequence is Large ribosomal subunit protein uL23 (96 aa).

It belongs to the universal ribosomal protein uL23 family. Part of the 50S ribosomal subunit. Contacts protein L29, and trigger factor when it is bound to the ribosome.

Functionally, one of the early assembly proteins it binds 23S rRNA. One of the proteins that surrounds the polypeptide exit tunnel on the outside of the ribosome. Forms the main docking site for trigger factor binding to the ribosome. This is Large ribosomal subunit protein uL23 from Bacillus cereus (strain ATCC 10987 / NRS 248).